The chain runs to 197 residues: Nucleoid occlusion factor SlmA (197 aa).

An HTH tetR-type domain is found at Ile-7–Leu-67. Residues Thr-30–Phe-49 constitute a DNA-binding region (H-T-H motif).

The protein belongs to the nucleoid occlusion factor SlmA family. In terms of assembly, homodimer. Interacts with FtsZ.

The protein resides in the cytoplasm. Its subcellular location is the nucleoid. Functionally, required for nucleoid occlusion (NO) phenomenon, which prevents Z-ring formation and cell division over the nucleoid. Acts as a DNA-associated cell division inhibitor that binds simultaneously chromosomal DNA and FtsZ, and disrupts the assembly of FtsZ polymers. SlmA-DNA-binding sequences (SBS) are dispersed on non-Ter regions of the chromosome, preventing FtsZ polymerization at these regions. This Shewanella amazonensis (strain ATCC BAA-1098 / SB2B) protein is Nucleoid occlusion factor SlmA.